Reading from the N-terminus, the 149-residue chain is Endoribonuclease YbeY (149 aa).

H116, H120, and H126 together coordinate Zn(2+).

The protein belongs to the endoribonuclease YbeY family. Zn(2+) is required as a cofactor.

Its subcellular location is the cytoplasm. Its function is as follows. Single strand-specific metallo-endoribonuclease involved in late-stage 70S ribosome quality control and in maturation of the 3' terminus of the 16S rRNA. The sequence is that of Endoribonuclease YbeY from Nocardioides sp. (strain ATCC BAA-499 / JS614).